Consider the following 265-residue polypeptide: MALQIPSLLLSAAVVVLMVLSSPRTEGGNSERHFVVQFKGECYYTNGTQRIRLVTRYIYNREEYVRYDSDVGEYRAVTELGRPDAEYWNSQPEILERTRAEVDTACRHNYEGPETSTSLRRLEQPNVAISLSRTEALNHHNTLVCSVTDFYPAKIKVRWFRNGQEETVGVSSTQLIRNGDWTFQVLVMLEMTPHQGEVYTCHVEHPSLKSPITVEWRAQSESARSKMLSGIGGCVLGVIFLGLGLFIRHRSQKGPRGPPPAGLLQ.

The first 27 residues, 1-27 (MALQIPSLLLSAAVVVLMVLSSPRTEG), serve as a signal peptide directing secretion. Residues 28-122 (GNSERHFVVQ…PETSTSLRRL (95 aa)) are beta-1. Residues 28–226 (GNSERHFVVQ…RAQSESARSK (199 aa)) are Extracellular-facing. Intrachain disulfides connect C42/C106 and C145/C201. A glycan (N-linked (GlcNAc...) asparagine) is linked at N46. Positions 123–216 (EQPNVAISLS…SLKSPITVEW (94 aa)) are beta-2. In terms of domain architecture, Ig-like C1-type spans 125–213 (PNVAISLSRT…EHPSLKSPIT (89 aa)). Residues 217 to 226 (RAQSESARSK) are connecting peptide. A helical membrane pass occupies residues 227–247 (MLSGIGGCVLGVIFLGLGLFI). At 248 to 265 (RHRSQKGPRGPPPAGLLQ) the chain is on the cytoplasmic side.

It belongs to the MHC class II family. Ubiquitinated in immature dendritic cells leading to down-regulation of MHC class II.

The protein localises to the membrane. The protein is H-2 class II histocompatibility antigen, A-D beta chain (H2-Ab1) of Mus musculus (Mouse).